A 285-amino-acid polypeptide reads, in one-letter code: NADPH-dependent 7-cyano-7-deazaguanine reductase (285 aa).

91–93 (IES) contributes to the substrate binding site. Residue 93 to 94 (SK) participates in NADPH binding. Residue C191 is the Thioimide intermediate of the active site. The active-site Proton donor is D198. Residue 230–231 (HE) coordinates substrate. 259-260 (RG) is a binding site for NADPH.

It belongs to the GTP cyclohydrolase I family. QueF type 2 subfamily. Homodimer.

It is found in the cytoplasm. It catalyses the reaction 7-aminomethyl-7-carbaguanine + 2 NADP(+) = 7-cyano-7-deazaguanine + 2 NADPH + 3 H(+). It functions in the pathway tRNA modification; tRNA-queuosine biosynthesis. In terms of biological role, catalyzes the NADPH-dependent reduction of 7-cyano-7-deazaguanine (preQ0) to 7-aminomethyl-7-deazaguanine (preQ1). This Legionella pneumophila (strain Paris) protein is NADPH-dependent 7-cyano-7-deazaguanine reductase.